The chain runs to 232 residues: Phosphatidylserine decarboxylase proenzyme (232 aa).

Ser190 functions as the Schiff-base intermediate with substrate; via pyruvic acid in the catalytic mechanism. Ser190 is modified (pyruvic acid (Ser); by autocatalysis).

The protein belongs to the phosphatidylserine decarboxylase family. PSD-A subfamily. In terms of assembly, heterodimer of a large membrane-associated beta subunit and a small pyruvoyl-containing alpha subunit. Requires pyruvate as cofactor. Is synthesized initially as an inactive proenzyme. Formation of the active enzyme involves a self-maturation process in which the active site pyruvoyl group is generated from an internal serine residue via an autocatalytic post-translational modification. Two non-identical subunits are generated from the proenzyme in this reaction, and the pyruvate is formed at the N-terminus of the alpha chain, which is derived from the carboxyl end of the proenzyme. The post-translation cleavage follows an unusual pathway, termed non-hydrolytic serinolysis, in which the side chain hydroxyl group of the serine supplies its oxygen atom to form the C-terminus of the beta chain, while the remainder of the serine residue undergoes an oxidative deamination to produce ammonia and the pyruvoyl prosthetic group on the alpha chain.

The protein localises to the cell membrane. It carries out the reaction a 1,2-diacyl-sn-glycero-3-phospho-L-serine + H(+) = a 1,2-diacyl-sn-glycero-3-phosphoethanolamine + CO2. Its pathway is phospholipid metabolism; phosphatidylethanolamine biosynthesis; phosphatidylethanolamine from CDP-diacylglycerol: step 2/2. Catalyzes the formation of phosphatidylethanolamine (PtdEtn) from phosphatidylserine (PtdSer). In Rhizobium etli (strain CIAT 652), this protein is Phosphatidylserine decarboxylase proenzyme.